The chain runs to 231 residues: Orotidine 5'-phosphate decarboxylase (231 aa).

Substrate is bound by residues D11, K33, 60–69, T119, R181, Q190, G210, and R211; that span reads DLKLHDIPNT. K62 serves as the catalytic Proton donor.

It belongs to the OMP decarboxylase family. Type 1 subfamily. As to quaternary structure, homodimer.

It carries out the reaction orotidine 5'-phosphate + H(+) = UMP + CO2. The protein operates within pyrimidine metabolism; UMP biosynthesis via de novo pathway; UMP from orotate: step 2/2. In terms of biological role, catalyzes the decarboxylation of orotidine 5'-monophosphate (OMP) to uridine 5'-monophosphate (UMP). The chain is Orotidine 5'-phosphate decarboxylase from Malacoplasma penetrans (strain HF-2) (Mycoplasma penetrans).